Reading from the N-terminus, the 481-residue chain is MQFRRYEDLRSKLLSRELTCEQVISEYLQRIDSKKDDNIFTAVFHEAALERARELDAKLERGEEPGVLFGMPIAIKDNISMKGAPLSCASKILDGYESVYDATAIERMVAEDAIFVGRTNMDEFAMGSSNENSAIGPVPNPFDKTRVPGGSSGGSAAAVANDLCMVALGSDTGGSVRQPGGFCNVVGLKPTYGRISRYGLVAFASSFDQIGVLAANCDDAALVLGVIAGQDDRDATSSHHEVPDYESTMDHVSLEGLRVGVPSAFFPENLNADVAGVVKAGLKKLEDAGAELVEIELPESDYAIAAYYILVTAEASSNLARFDGARYGYRSPDSPDLSSMYVNSRTEGFGAEVKRRIMLGTYVLSAGYYDTYYKKAQQVRRVFQEKYREAFEKVDVIAGPTSPFPPFGIGDKMDNPLEMYLADVFTVPASIVGMPAVSVPVGFDSLGLPVGVHLICNFFEEGKMLGIARNLQALCQTAPSN.

Active-site charge relay system residues include Lys-76 and Ser-151. Ser-175 serves as the catalytic Acyl-ester intermediate.

This sequence belongs to the amidase family. GatA subfamily. In terms of assembly, heterotrimer of A, B and C subunits.

It carries out the reaction L-glutamyl-tRNA(Gln) + L-glutamine + ATP + H2O = L-glutaminyl-tRNA(Gln) + L-glutamate + ADP + phosphate + H(+). In terms of biological role, allows the formation of correctly charged Gln-tRNA(Gln) through the transamidation of misacylated Glu-tRNA(Gln) in organisms which lack glutaminyl-tRNA synthetase. The reaction takes place in the presence of glutamine and ATP through an activated gamma-phospho-Glu-tRNA(Gln). The protein is Glutamyl-tRNA(Gln) amidotransferase subunit A of Chlorobaculum parvum (strain DSM 263 / NCIMB 8327) (Chlorobium vibrioforme subsp. thiosulfatophilum).